The following is a 115-amino-acid chain: Protein SPIRAL1-like 2 (115 aa).

A disordered region spans residues 29 to 48; sequence AKAKPAAAAEKETTPAPVKK.

This sequence belongs to the SPIRAL1 family.

In terms of biological role, acts in maintaining the cortical microtubules organization essential for anisotropic cell growth. This Oryza sativa subsp. japonica (Rice) protein is Protein SPIRAL1-like 2.